Reading from the N-terminus, the 199-residue chain is Adenylate kinase (199 aa).

ATP is bound at residue 10–15; the sequence is GAGKGT. The tract at residues 30–59 is NMP; the sequence is STGDMLRAAVAARTPVGLQAKSIMESGGLV. AMP-binding positions include T31, R36, 57–59, 85–88, and Q92; these read GLV and GFPR. An LID region spans residues 126–142; it reads KRAAETLARGEAVRKDD. R127 is an ATP binding site. AMP-binding residues include R139 and R150. A178 contributes to the ATP binding site.

It belongs to the adenylate kinase family. In terms of assembly, monomer.

It is found in the cytoplasm. The catalysed reaction is AMP + ATP = 2 ADP. The protein operates within purine metabolism; AMP biosynthesis via salvage pathway; AMP from ADP: step 1/1. Its function is as follows. Catalyzes the reversible transfer of the terminal phosphate group between ATP and AMP. Plays an important role in cellular energy homeostasis and in adenine nucleotide metabolism. This is Adenylate kinase from Methylobacterium nodulans (strain LMG 21967 / CNCM I-2342 / ORS 2060).